We begin with the raw amino-acid sequence, 857 residues long: uncharacterized protein (857 aa).

Disordered regions lie at residues Pro-316–Asn-339, Ala-484–Asn-561, Gly-619–Gln-777, and Glu-809–Lys-836. Basic and acidic residues-rich tracts occupy residues Pro-324–Asn-339, Lys-518–Glu-534, and Gln-630–Cys-640. Residues Arg-683–Arg-700 are compositionally biased toward polar residues. A compositionally biased stretch (low complexity) spans Ser-708 to Ser-725. Over residues Thr-726 to Ala-738 the composition is skewed to polar residues. Residues Glu-809–Ala-828 show a composition bias toward basic and acidic residues.

This is an uncharacterized protein from Mus musculus (Mouse).